A 244-amino-acid polypeptide reads, in one-letter code: E3 ubiquitin-protein ligase RNF166 (244 aa).

A disordered region spans residues A10 to A30. Residues A15 to G28 are compositionally biased toward pro residues. The RING-type zinc-finger motif lies at C40–R80. Zn(2+)-binding residues include C105, C108, H120, and C124. A C2HC RNF-type zinc finger spans residues C105 to C124. Positions D228–N244 constitute a UIM domain.

Its subcellular location is the cytoplasm. The catalysed reaction is S-ubiquitinyl-[E2 ubiquitin-conjugating enzyme]-L-cysteine + [acceptor protein]-L-lysine = [E2 ubiquitin-conjugating enzyme]-L-cysteine + N(6)-ubiquitinyl-[acceptor protein]-L-lysine.. The protein operates within protein modification; protein ubiquitination. E3 ubiquitin-protein ligase that promotes the ubiquitination of different substrates. The chain is E3 ubiquitin-protein ligase RNF166 (RNF166) from Gallus gallus (Chicken).